We begin with the raw amino-acid sequence, 671 residues long: DNA ligase (671 aa).

Residues 32 to 36 (DAEYD), 81 to 82 (SL), and Glu-113 each bind NAD(+). The active-site N6-AMP-lysine intermediate is Lys-115. Positions 136, 173, 290, and 314 each coordinate NAD(+). Residues Cys-408, Cys-411, Cys-426, and Cys-432 each coordinate Zn(2+). The BRCT domain maps to 593 to 671 (EIDSPFAGKT…EAEMIRLLGA (79 aa)).

It belongs to the NAD-dependent DNA ligase family. LigA subfamily. It depends on Mg(2+) as a cofactor. The cofactor is Mn(2+).

It catalyses the reaction NAD(+) + (deoxyribonucleotide)n-3'-hydroxyl + 5'-phospho-(deoxyribonucleotide)m = (deoxyribonucleotide)n+m + AMP + beta-nicotinamide D-nucleotide.. DNA ligase that catalyzes the formation of phosphodiester linkages between 5'-phosphoryl and 3'-hydroxyl groups in double-stranded DNA using NAD as a coenzyme and as the energy source for the reaction. It is essential for DNA replication and repair of damaged DNA. The sequence is that of DNA ligase from Salmonella paratyphi C (strain RKS4594).